An 888-amino-acid chain; its full sequence is Translation initiation factor IF-2 (888 aa).

Disordered regions lie at residues 96–122 (TTKQ…EAPE) and 158–302 (ELKE…SAPT). Composition is skewed to basic and acidic residues over residues 98 to 114 (KQDE…EDVS) and 158 to 167 (ELKEKQEKRR). Residues 181 to 206 (TQVQEPGSETAAVSGSVAATQPESTE) are compositionally biased toward polar residues. The span at 207 to 225 (TAAVTPSATITVTTQTTPA) shows a compositional bias: low complexity. Basic and acidic residues-rich tracts occupy residues 226-243 (AKER…EKGE) and 253-269 (EAWK…KARG). Positions 390–559 (SRAPVVTVMG…LLQAEVLELK (170 aa)) constitute a tr-type G domain. The G1 stretch occupies residues 399-406 (GHVDHGKT). 399–406 (GHVDHGKT) is a GTP binding site. Positions 424-428 (GITQH) are G2. Positions 445 to 448 (DTPG) are G3. Residues 445 to 449 (DTPGH) and 499 to 502 (NKMD) each bind GTP. Residues 499–502 (NKMD) are G4. The interval 535–537 (SAK) is G5.

Belongs to the TRAFAC class translation factor GTPase superfamily. Classic translation factor GTPase family. IF-2 subfamily.

Its subcellular location is the cytoplasm. In terms of biological role, one of the essential components for the initiation of protein synthesis. Protects formylmethionyl-tRNA from spontaneous hydrolysis and promotes its binding to the 30S ribosomal subunits. Also involved in the hydrolysis of GTP during the formation of the 70S ribosomal complex. The polypeptide is Translation initiation factor IF-2 (Nitrosomonas eutropha (strain DSM 101675 / C91 / Nm57)).